Here is a 433-residue protein sequence, read N- to C-terminus: MNVKIDGRRKINSNVIVPPDKSISHRSIMIGSLANGVTEIENFLFSDDCLATINCFKNLSTDIEIRNDKIIVKGNGFALSAPKQILDCQNSGTTTRLLLGILSTQEFESILTGDSSLKKRPMKRVTVPLSQMGAEFEFLEKEDFLPIKVKGSKKLKPIEYTLPIPSAQVKSALIFASLKAEGKSVIKESPKSRDHTELMLKHAGANIKSWEKDGVYTVEILPSQISSIKIKIPSDISSAAFFIVLALICEGSSVVIENCILNPTRTGIIDVLKQMGAEIKIEDVENRNGELVGKIVARSSNLRGVKVEKNDIPRIIDEIPILAVAAAFAEGKTIIDHASELRVKESDRIKTTVEMLKSFGAECYELENGLEIIGSREKLKSAVVNSYKDHRIAMAASIMACAVEGESTILDADCVSISFPNFYDILFSSTKKI.

Residues lysine 21, serine 22, and arginine 26 each coordinate 3-phosphoshikimate. Lysine 21 serves as a coordination point for phosphoenolpyruvate. Phosphoenolpyruvate-binding residues include glycine 92 and arginine 120. Positions 166, 168, 317, and 344 each coordinate 3-phosphoshikimate. Position 168 (glutamine 168) interacts with phosphoenolpyruvate. The Proton acceptor role is filled by aspartate 317. Phosphoenolpyruvate contacts are provided by arginine 348 and arginine 391.

The protein belongs to the EPSP synthase family. Monomer.

The protein resides in the cytoplasm. It carries out the reaction 3-phosphoshikimate + phosphoenolpyruvate = 5-O-(1-carboxyvinyl)-3-phosphoshikimate + phosphate. It functions in the pathway metabolic intermediate biosynthesis; chorismate biosynthesis; chorismate from D-erythrose 4-phosphate and phosphoenolpyruvate: step 6/7. Catalyzes the transfer of the enolpyruvyl moiety of phosphoenolpyruvate (PEP) to the 5-hydroxyl of shikimate-3-phosphate (S3P) to produce enolpyruvyl shikimate-3-phosphate and inorganic phosphate. This Caldicellulosiruptor bescii (strain ATCC BAA-1888 / DSM 6725 / KCTC 15123 / Z-1320) (Anaerocellum thermophilum) protein is 3-phosphoshikimate 1-carboxyvinyltransferase.